Consider the following 158-residue polypeptide: Transcriptional repressor NrdR (158 aa).

Residues 3 to 34 (CPYCGYPDSKVIDSRPTDDNTSIRRRRECLKC) fold into a zinc finger. Residues 49–139 (ILVIKKDNRR…VYRQFKDINT (91 aa)) form the ATP-cone domain.

It belongs to the NrdR family. The cofactor is Zn(2+).

In terms of biological role, negatively regulates transcription of bacterial ribonucleotide reductase nrd genes and operons by binding to NrdR-boxes. The sequence is that of Transcriptional repressor NrdR from Thermoanaerobacter pseudethanolicus (strain ATCC 33223 / 39E) (Clostridium thermohydrosulfuricum).